A 252-amino-acid polypeptide reads, in one-letter code: Ribosomal RNA small subunit methyltransferase J (252 aa).

S-adenosyl-L-methionine contacts are provided by residues 101 to 102 (RD), 117 to 118 (ER), 153 to 154 (SS), and Asp-171.

It belongs to the methyltransferase superfamily. RsmJ family.

The protein localises to the cytoplasm. It catalyses the reaction guanosine(1516) in 16S rRNA + S-adenosyl-L-methionine = N(2)-methylguanosine(1516) in 16S rRNA + S-adenosyl-L-homocysteine + H(+). Specifically methylates the guanosine in position 1516 of 16S rRNA. This Pseudoalteromonas translucida (strain TAC 125) protein is Ribosomal RNA small subunit methyltransferase J.